The following is a 24-amino-acid chain: FLPIIASVAAKLIPSIVCRITKKC.

A disulfide bridge links Cys-18 with Cys-24.

As to expression, expressed by the skin glands.

The protein resides in the secreted. Functionally, antimicrobial peptide with activity against Gram-negative and Gram-positive bacteria and fungi. Also shows hemolytic activity. This Lithobates septentrionalis (Mink frog) protein is Brevinin-1SPc.